Reading from the N-terminus, the 509-residue chain is Glycogen synthase (509 aa).

Position 47 (K47) interacts with ADP-alpha-D-glucose.

Belongs to the glycosyltransferase 1 family. Bacterial/plant glycogen synthase subfamily.

It carries out the reaction [(1-&gt;4)-alpha-D-glucosyl](n) + ADP-alpha-D-glucose = [(1-&gt;4)-alpha-D-glucosyl](n+1) + ADP + H(+). The protein operates within glycan biosynthesis; glycogen biosynthesis. Functionally, synthesizes alpha-1,4-glucan chains using ADP-glucose. The polypeptide is Glycogen synthase (Xanthomonas euvesicatoria pv. vesicatoria (strain 85-10) (Xanthomonas campestris pv. vesicatoria)).